A 387-amino-acid chain; its full sequence is Chaperone protein DnaJ (387 aa).

One can recognise a J domain in the interval 5 to 70 (DYYEVLGLQK…DKKAKYDQFG (66 aa)). The CR-type zinc finger occupies 144–226 (GCEKEISITR…CKGKGTVRKN (83 aa)). Zn(2+) contacts are provided by Cys-157, Cys-160, Cys-174, Cys-177, Cys-200, Cys-203, Cys-214, and Cys-217. 4 CXXCXGXG motif repeats span residues 157-164 (CETCHGTG), 174-181 (CPKCNGSG), 200-207 (CDQCGGTG), and 214-221 (CPDCKGKG).

Belongs to the DnaJ family. In terms of assembly, homodimer. The cofactor is Zn(2+).

The protein resides in the cytoplasm. In terms of biological role, participates actively in the response to hyperosmotic and heat shock by preventing the aggregation of stress-denatured proteins and by disaggregating proteins, also in an autonomous, DnaK-independent fashion. Unfolded proteins bind initially to DnaJ; upon interaction with the DnaJ-bound protein, DnaK hydrolyzes its bound ATP, resulting in the formation of a stable complex. GrpE releases ADP from DnaK; ATP binding to DnaK triggers the release of the substrate protein, thus completing the reaction cycle. Several rounds of ATP-dependent interactions between DnaJ, DnaK and GrpE are required for fully efficient folding. Also involved, together with DnaK and GrpE, in the DNA replication of plasmids through activation of initiation proteins. This Clostridium perfringens (strain 13 / Type A) protein is Chaperone protein DnaJ.